Consider the following 449-residue polypeptide: Guanine nucleotide-binding protein alpha-2 subunit (449 aa).

A disordered region spans residues 1 to 91 (MGLCASSEKN…TATANTSGSQ (91 aa)). G2 is lipidated: N-myristoyl glycine. The S-palmitoyl cysteine moiety is linked to residue C4. Polar residues-rich tracts occupy residues 7-23 (SEKNGSTPDTQTASAGS) and 38-48 (QKTVRTVNTAN). Residues 49–59 (QQEKQQQRQQQ) show a composition bias toward low complexity. Residues 72–91 (NGSINNAISPTATANTSGSQ) are compositionally biased toward polar residues. Positions 122 to 448 (KELKVLLLGA…ENTLKDSGVL (327 aa)) constitute a G-alpha domain. A G1 motif region spans residues 125 to 138 (KVLLLGAGESGKST). Residues E133, S134, G135, K136, S137, T138, D245, L270, T276, G299, N365, K366, D368, and A420 each coordinate GTP. S137 provides a ligand contact to Mg(2+). The G2 motif stretch occupies residues 268 to 276 (DILRSRQMT). Residue T276 participates in Mg(2+) binding. Residues 292 to 301 (MHIYDVGGQR) are G3 motif. The tract at residues 361-368 (VLFLNKID) is G4 motif. The interval 418 to 423 (TQATDT) is G5 motif.

It belongs to the G-alpha family. G(q) subfamily. As to quaternary structure, g proteins are composed of 3 units; alpha, beta and gamma. The alpha chain contains the guanine nucleotide binding site. GPA2 interacts with the kelch repeat beta-mimic proteins GPB1 and GPB2 and with the gamma subunit GPG1. Interacts with the G protein coupled receptor GPR1. Also interacts with regulators of G protein signaling (RGS) protein RGS2. It depends on Mg(2+) as a cofactor. Myristoylation at Gly-2 and palmitoylation at Cys-4 are required for membrane localization and function of the protein.

Its subcellular location is the cell membrane. With respect to regulation, alternates between an inactive form bound to GDP and an active form bound to GTP. Activated by the G protein coupled receptor (GPCR) GPR1, which serves as a guanine nucleotide-exchange factor (GEF), and inactivated by RGS2, acting as a GTPase-activating protein (GAP) for GPA2. In terms of biological role, alpha subunit of the heterotrimeric guanine nucleotide-binding protein (G protein) involved in glucose-induced cAMP signaling. Binds to its cognate transmembrane receptor GPR1, which senses extracellular carbon sources, and activates cAMP-PKA signaling and governs diploid pseudohyphal differentiation and haploid invasive growth. The G protein beta-mimic proteins GPB1 and GPB2 inhibit GPA2-GPR1 coupling, probably to reduce signaling in the absence of glucose. The polypeptide is Guanine nucleotide-binding protein alpha-2 subunit (GPA2) (Saccharomyces cerevisiae (strain ATCC 204508 / S288c) (Baker's yeast)).